The primary structure comprises 309 residues: Homoserine O-succinyltransferase (309 aa).

Cys-142 (acyl-thioester intermediate) is an active-site residue. The substrate site is built by Lys-163 and Ser-192. His-235 (proton acceptor) is an active-site residue. Residue Glu-237 is part of the active site. Residue Arg-249 participates in substrate binding.

It belongs to the MetA family. Homodimer.

The protein resides in the cytoplasm. The enzyme catalyses L-homoserine + succinyl-CoA = O-succinyl-L-homoserine + CoA. It functions in the pathway amino-acid biosynthesis; L-methionine biosynthesis via de novo pathway; O-succinyl-L-homoserine from L-homoserine: step 1/1. Functionally, transfers a succinyl group from succinyl-CoA to L-homoserine, forming succinyl-L-homoserine. This chain is Homoserine O-succinyltransferase, found in Escherichia coli O17:K52:H18 (strain UMN026 / ExPEC).